The chain runs to 227 residues: Cytidylate kinase (227 aa).

Residue 12–20 (GPSGAGKGT) participates in ATP binding.

The protein belongs to the cytidylate kinase family. Type 1 subfamily.

The protein localises to the cytoplasm. The catalysed reaction is CMP + ATP = CDP + ADP. It carries out the reaction dCMP + ATP = dCDP + ADP. The sequence is that of Cytidylate kinase from Marinomonas sp. (strain MWYL1).